Consider the following 674-residue polypeptide: Probable L-type lectin-domain containing receptor kinase I.5 (674 aa).

An N-terminal signal peptide occupies residues 1–22 (MSKGLFLIWLISSFHLISFSTS). Residues 23–286 (SKDTSFVFNG…RPRAEHKKVQ (264 aa)) are Extracellular-facing. Positions 25–258 (DTSFVFNGFG…YHYLLGWSFS (234 aa)) are legume-lectin like. N-linked (GlcNAc...) asparagine glycans are attached at residues asparagine 124, asparagine 181, asparagine 185, asparagine 204, and asparagine 225. Residues 287-307 (FALIIALPVILAIVVMAVLAG) form a helical membrane-spanning segment. Over 308–674 (VYYHRKKKYA…DHEQPLEFKS (367 aa)) the chain is Cytoplasmic. A Protein kinase domain is found at 344 to 625 (FHKDRFLGRG…LPLPDFSPYT (282 aa)). ATP is bound by residues 350-358 (LGRGGFGEV) and lysine 372. Aspartate 468 serves as the catalytic Proton acceptor. The segment covering 649 to 662 (NWSAPSASSSSANN) has biased composition (low complexity). The segment at 649-674 (NWSAPSASSSSANNSKDHEQPLEFKS) is disordered. Residues 663-674 (SKDHEQPLEFKS) show a composition bias toward basic and acidic residues.

In the C-terminal section; belongs to the protein kinase superfamily. Ser/Thr protein kinase family. This sequence in the N-terminal section; belongs to the leguminous lectin family.

Its subcellular location is the cell membrane. The enzyme catalyses L-seryl-[protein] + ATP = O-phospho-L-seryl-[protein] + ADP + H(+). The catalysed reaction is L-threonyl-[protein] + ATP = O-phospho-L-threonyl-[protein] + ADP + H(+). This Arabidopsis thaliana (Mouse-ear cress) protein is Probable L-type lectin-domain containing receptor kinase I.5 (LECRK15).